The following is a 64-amino-acid chain: Cytochrome c oxidase subunit 9, mitochondrial (64 aa).

At 1–15 (MAATAVRPITGMLRR) the chain is on the mitochondrial matrix side. The helical transmembrane segment at 16–36 (GLILDIGIALGVGFVMANGYW) threads the bilayer. At 37 to 64 (YGYHMPRTNARDNYYKKLEEERAARMGA) the chain is on the mitochondrial intermembrane side.

Belongs to the fungal cytochrome c oxidase subunit 7a family. As to quaternary structure, component of the cytochrome c oxidase (complex IV, CIV), a multisubunit enzyme composed of 11 subunits. The complex is composed of a catalytic core of 3 subunits Cox1, Cox2 and Cox3, encoded in the mitochondrial DNA, and 8 supernumerary subunits Cox4, Cox5a/Cox5, Cox6, Cox7, Cox8, Cox7a/Cox9, Cox6b/Cox12 and Cox6a/Cox13, which are encoded in the nuclear genome. The complex exists as a monomer or a dimer and forms respiratory supercomplexes (SCs) in the inner mitochondrial membrane with NADH-ubiquinone oxidoreductase (complex I, CI) and ubiquinol-cytochrome c oxidoreductase (cytochrome b-c1 complex, complex III, CIII), resulting in various different assemblies (supercomplexes I(1)IV(1), I(1)III(3)IV(2), III(2)IV(1) and III(2)IV(2) as well as larger supercomplexes of compositions like I(1)III(2)IV(5-6)).

It is found in the mitochondrion inner membrane. It functions in the pathway energy metabolism; oxidative phosphorylation. Its function is as follows. Component of the cytochrome c oxidase, the last enzyme in the mitochondrial electron transport chain which drives oxidative phosphorylation. The respiratory chain contains 3 multisubunit complexes succinate dehydrogenase (complex II, CII), ubiquinol-cytochrome c oxidoreductase (cytochrome b-c1 complex, complex III, CIII) and cytochrome c oxidase (complex IV, CIV), that cooperate to transfer electrons derived from NADH and succinate to molecular oxygen, creating an electrochemical gradient over the inner membrane that drives transmembrane transport and the ATP synthase. Cytochrome c oxidase is the component of the respiratory chain that catalyzes the reduction of oxygen to water. Electrons originating from reduced cytochrome c in the intermembrane space (IMS) are transferred via the dinuclear copper A center (CU(A)) of Cox2 and heme A of Cox1 to the active site in Cox1, a binuclear center (BNC) formed by heme A3 and copper B (CU(B)). The BNC reduces molecular oxygen to 2 water molecules using 4 electrons from cytochrome c in the IMS and 4 protons from the mitochondrial matrix. The polypeptide is Cytochrome c oxidase subunit 9, mitochondrial (cox-17) (Neurospora crassa (strain ATCC 24698 / 74-OR23-1A / CBS 708.71 / DSM 1257 / FGSC 987)).